The sequence spans 367 residues: Germination protease (367 aa).

A propeptide spanning residues 1-15 is cleaved from the precursor; the sequence is MKEPLDLSKYSVRTD.

Belongs to the peptidase A25 family. As to quaternary structure, homotetramer. Post-translationally, autoproteolytically processed. The inactive tetrameric zymogen termed p46 autoprocesses to a smaller form termed p41, which is active only during spore germination.

The catalysed reaction is Endopeptidase action with P4 Glu or Asp, P1 preferably Glu &gt; Asp, P1' hydrophobic and P2' Ala.. Initiates the rapid degradation of small, acid-soluble proteins during spore germination. This chain is Germination protease, found in Bacillus cereus (strain AH187).